The sequence spans 206 residues: dITP/XTP pyrophosphatase (206 aa).

Residue 7 to 12 (SNNAKK) coordinates substrate. Catalysis depends on Asp72, which acts as the Proton acceptor. Asp72 serves as a coordination point for Mg(2+). Residues Ser73, 155–158 (FGYD), Lys182, and 187–188 (HR) contribute to the substrate site.

Belongs to the HAM1 NTPase family. As to quaternary structure, homodimer. The cofactor is Mg(2+).

The enzyme catalyses XTP + H2O = XMP + diphosphate + H(+). The catalysed reaction is dITP + H2O = dIMP + diphosphate + H(+). It carries out the reaction ITP + H2O = IMP + diphosphate + H(+). Pyrophosphatase that catalyzes the hydrolysis of nucleoside triphosphates to their monophosphate derivatives, with a high preference for the non-canonical purine nucleotides XTP (xanthosine triphosphate), dITP (deoxyinosine triphosphate) and ITP. Seems to function as a house-cleaning enzyme that removes non-canonical purine nucleotides from the nucleotide pool, thus preventing their incorporation into DNA/RNA and avoiding chromosomal lesions. The protein is dITP/XTP pyrophosphatase of Corynebacterium glutamicum (strain R).